A 266-amino-acid chain; its full sequence is Cyclin-C (266 aa).

The Cyclin N-terminal domain maps to 47–151 (IIQVLGEQLK…LLENLDCCLI (105 aa)).

Belongs to the cyclin family. Cyclin C subfamily. In terms of assembly, component of the Cdk8 module of the Mediator complex.

Its subcellular location is the nucleus. Component of the Mediator complex, a coactivator involved in regulated gene transcription of nearly all RNA polymerase II-dependent genes. Mediator functions as a bridge to convey information from gene-specific regulatory proteins to the basal RNA polymerase II transcription machinery. Mediator is recruited to promoters by direct interactions with regulatory proteins and serves as a scaffold for the assembly of a functional preinitiation complex with RNA polymerase II and the general transcription factors. Binds to and activates cyclin-dependent kinase Cdk8 that phosphorylates the CTD (C-terminal domain) of the large subunit of RNA polymerase II (RNAp II), which may inhibit the formation of a transcription initiation complex. The protein is Cyclin-C (CycC) of Anopheles gambiae (African malaria mosquito).